A 1503-amino-acid chain; its full sequence is Translocase of chloroplast 159, chloroplastic (1503 aa).

Residues 1 to 24 (MDSKSVTPEPTNPFYASSGQSGKT) show a composition bias toward polar residues. The interval 1–210 (MDSKSVTPEP…GGKVDVDDKS (210 aa)) is disordered. Residues 21–37 (SGKTYASVVAAAAAAAA) traverse the membrane as a helical segment. Ser71 is modified (phosphoserine). 2 stretches are compositionally biased toward basic and acidic residues: residues 85–98 (KVSD…KEDS) and 176–210 (SESK…DDKS). Ser210, Ser281, and Ser288 each carry phosphoserine. 2 disordered regions span residues 298–338 (KFTS…DVEK) and 429–464 (VHNK…SEGD). A compositionally biased stretch (basic and acidic residues) spans 447–456 (ESDKATEEGG). Residues Ser448, Ser461, Ser589, Ser609, Ser630, Ser632, and Ser665 each carry the phosphoserine modification. The disordered stretch occupies residues 610–633 (FGGKEVDQEPSGEGVTRVDGSESE). The stretch at 781–804 (EEEKQKLEKLQSLRVKFLRLLQRL) forms a coiled coil. An AIG1-type G domain is found at 853 to 1087 (IFSLNILVLG…RPQEPLDHRK (235 aa)). The tract at residues 862–869 (GKAGVGKS) is G1. GTP is bound by residues 865-870 (GVGKSA) and 884-889 (DAFGLS). Residue Ser869 participates in Mg(2+) binding. Positions 884-887 (DAFG) are homodimerization. Positions 889 to 893 (STTSV) are G2. Residues 909 to 912 (DTPG) are G3. A homodimerization region spans residues 947-952 (RLDTQT). Residues 981 to 984 (THAA) are G4. GTP contacts are provided by residues His982 and 1035–1036 (EN). A G5 region spans residues 1035–1037 (ENH). Positions 1175–1203 (DYRVKLLQKKQWREELKRMKEMKKNGKKL) form a coiled coil. The segment at 1203–1222 (LGESEFGYPGEEDDPENGAP) is disordered.

The protein belongs to the TRAFAC class TrmE-Era-EngA-EngB-Septin-like GTPase superfamily. AIG1/Toc34/Toc159-like paraseptin GTPase family. TOC159 subfamily. In terms of assembly, homodimer and heterodimer with TOC33. Part of the TOC core complex that includes 1 protein for the specific recognition of transit peptides surrounded by a ring composed of four proteins forming translocation channels, and four to five GTP-binding proteins providing energy. This core complex can interact with components of the TIC complex to form a larger import complex. Chloroplastic protein precursor such as prSS (precursor of the RuBisCO small subunit) interacts with these complexes. The TOC complex contains a specific subset of polar lipids such as digalactosyldiacylglyceride (DGDG), phosphatidylcholine (PC) and phosphatidylglycerol (PG). Interacts with SP1. The cofactor is Mg(2+). In terms of processing, phosphorylated by KOC1.

It is found in the plastid. The protein resides in the chloroplast outer membrane. Its subcellular location is the cytoplasm. Its function is as follows. GTPase involved in protein precursor import into chloroplasts. Seems to recognize chloroplast-destined precursor proteins and regulate their presentation to the translocation channel through GTP hydrolysis. Required for chloroplast biogenesis. Probably specialized in the import of nuclear encoded photosynthetic preproteins from the cytoplasm to the chloroplast. This chain is Translocase of chloroplast 159, chloroplastic, found in Arabidopsis thaliana (Mouse-ear cress).